Here is a 224-residue protein sequence, read N- to C-terminus: Prolactin-3D1 (224 aa).

The first 29 residues, 1–29 (MQLTLNLSGSAGMQLLLLVSSLLLWENVS), serve as a signal peptide directing secretion. Disulfide bonds link Cys-81–Cys-199 and Cys-216–Cys-224. N-linked (GlcNAc...) asparagine glycans are attached at residues Asn-109 and Asn-158.

The protein belongs to the somatotropin/prolactin family.

Its subcellular location is the secreted. The protein is Prolactin-3D1 (Prl3d1) of Mus musculus (Mouse).